The primary structure comprises 316 residues: Ubiquinol oxidase, mitochondrial (316 aa).

The transit peptide at 1–26 (MGVRAQPLLARSLITTTQPWILSARS) directs the protein to the mitochondrion. The helical transmembrane segment at 124 to 144 (VHRAVVLETVAAVPGMVAGML) threads the bilayer. Fe cation contacts are provided by glutamate 131, glutamate 170, and histidine 173. Residues 189–209 (MLVALVQTLFFNVYFLAYMLF) form a helical membrane-spanning segment. Fe cation is bound by residues glutamate 221, glutamate 272, and histidine 275.

The protein belongs to the alternative oxidase family. It depends on Fe cation as a cofactor.

It is found in the mitochondrion inner membrane. It catalyses the reaction 2 a ubiquinol + O2 = 2 a ubiquinone + 2 H2O. In terms of biological role, alternative oxidase which function may be to reoxidize reducing equivalents produced by glycolysis such as ubiquinol. This Batrachochytrium dendrobatidis (strain JAM81 / FGSC 10211) (Frog chytrid fungus) protein is Ubiquinol oxidase, mitochondrial (AOX).